Here is a 253-residue protein sequence, read N- to C-terminus: 3-deoxy-manno-octulosonate cytidylyltransferase (253 aa).

This sequence belongs to the KdsB family.

Its subcellular location is the cytoplasm. The catalysed reaction is 3-deoxy-alpha-D-manno-oct-2-ulosonate + CTP = CMP-3-deoxy-beta-D-manno-octulosonate + diphosphate. The protein operates within nucleotide-sugar biosynthesis; CMP-3-deoxy-D-manno-octulosonate biosynthesis; CMP-3-deoxy-D-manno-octulosonate from 3-deoxy-D-manno-octulosonate and CTP: step 1/1. Its pathway is bacterial outer membrane biogenesis; lipopolysaccharide biosynthesis. Activates KDO (a required 8-carbon sugar) for incorporation into bacterial lipopolysaccharide in Gram-negative bacteria. This Pseudoalteromonas translucida (strain TAC 125) protein is 3-deoxy-manno-octulosonate cytidylyltransferase.